We begin with the raw amino-acid sequence, 193 residues long: dCTP deaminase (193 aa).

Residues 110–115, Asp128, 136–138, Tyr171, Lys178, and Gln182 contribute to the dCTP site; these read RSSLAR and VLE. The active-site Proton donor/acceptor is the Glu138. Residues 174–193 are disordered; the sequence is RKSAKYKDQQEAVASRISQD.

The protein belongs to the dCTP deaminase family. In terms of assembly, homotrimer.

It carries out the reaction dCTP + H2O + H(+) = dUTP + NH4(+). Its pathway is pyrimidine metabolism; dUMP biosynthesis; dUMP from dCTP (dUTP route): step 1/2. In terms of biological role, catalyzes the deamination of dCTP to dUTP. This chain is dCTP deaminase, found in Shewanella baltica (strain OS223).